The chain runs to 162 residues: Corticoliberin (162 aa).

An N-terminal signal peptide occupies residues 1–24; that stretch reads MKFQLWVSTGILLVSLLPCHECRA. Residues 25–119 constitute a propeptide that is removed on maturation; sequence FIKSPASSPG…QEDPTEKAKR (95 aa). Positions 91-122 are disordered; it reads SQPGMRAASLDGADSPYSAQEDPTEKAKRAEE. Residues 113-122 are compositionally biased toward basic and acidic residues; the sequence is PTEKAKRAEE. Position 160 is an isoleucine amide (isoleucine 160).

The protein belongs to the sauvagine/corticotropin-releasing factor/urotensin I family.

The protein resides in the secreted. This hormone from hypothalamus regulates the release of corticotropin from pituitary gland. This chain is Corticoliberin (crh), found in Xenopus laevis (African clawed frog).